Consider the following 78-residue polypeptide: Large ribosomal subunit protein bL28 (78 aa).

This sequence belongs to the bacterial ribosomal protein bL28 family.

The protein is Large ribosomal subunit protein bL28 of Acinetobacter baylyi (strain ATCC 33305 / BD413 / ADP1).